We begin with the raw amino-acid sequence, 287 residues long: 4-hydroxybenzoate octaprenyltransferase (287 aa).

6 helical membrane-spanning segments follow: residues 41–61 (WPLLVIFTLGTLLMRSAGCAM), 89–109 (WEAVAIAVGLSFIAFLLILPL), 133–153 (FFAIPQAYLGIAFGFGIPMAF), 158–178 (DTVPMLAWVMLVANIFWSVAY), 202–224 (FGRFDVAAVMACYAATLGIYVWI), and 266–286 (HNNWLGGVLFAGIAVHYLLAG).

The protein belongs to the UbiA prenyltransferase family. Mg(2+) is required as a cofactor.

It is found in the cell inner membrane. The catalysed reaction is all-trans-octaprenyl diphosphate + 4-hydroxybenzoate = 4-hydroxy-3-(all-trans-octaprenyl)benzoate + diphosphate. It participates in cofactor biosynthesis; ubiquinone biosynthesis. In terms of biological role, catalyzes the prenylation of para-hydroxybenzoate (PHB) with an all-trans polyprenyl group. Mediates the second step in the final reaction sequence of ubiquinone-8 (UQ-8) biosynthesis, which is the condensation of the polyisoprenoid side chain with PHB, generating the first membrane-bound Q intermediate 3-octaprenyl-4-hydroxybenzoate. In Burkholderia orbicola (strain MC0-3), this protein is 4-hydroxybenzoate octaprenyltransferase.